The primary structure comprises 221 residues: Adenylate kinase (221 aa).

10-15 (GAGKGT) is a binding site for ATP. An NMP region spans residues 30–59 (STGDMLRAAVKAGTPLGLEAKRFMDAGELV). Residues T31, R36, 57 to 59 (ELV), 85 to 88 (GFPR), and Q92 contribute to the AMP site. The interval 122–159 (GRRSHAASGRTYHVKFNPPKVEGVDDMTGEPLIQRDDD) is LID. ATP contacts are provided by residues R123 and 132-133 (TY). AMP contacts are provided by R156 and R167. Residue G207 participates in ATP binding.

It belongs to the adenylate kinase family. As to quaternary structure, monomer.

Its subcellular location is the cytoplasm. It carries out the reaction AMP + ATP = 2 ADP. It participates in purine metabolism; AMP biosynthesis via salvage pathway; AMP from ADP: step 1/1. In terms of biological role, catalyzes the reversible transfer of the terminal phosphate group between ATP and AMP. Plays an important role in cellular energy homeostasis and in adenine nucleotide metabolism. The chain is Adenylate kinase from Paraburkholderia phytofirmans (strain DSM 17436 / LMG 22146 / PsJN) (Burkholderia phytofirmans).